Reading from the N-terminus, the 449-residue chain is UDP-N-acetylmuramoylalanine--D-glutamate ligase (449 aa).

113–119 is an ATP binding site; that stretch reads GTNGKTT.

It belongs to the MurCDEF family.

It is found in the cytoplasm. It catalyses the reaction UDP-N-acetyl-alpha-D-muramoyl-L-alanine + D-glutamate + ATP = UDP-N-acetyl-alpha-D-muramoyl-L-alanyl-D-glutamate + ADP + phosphate + H(+). The protein operates within cell wall biogenesis; peptidoglycan biosynthesis. Functionally, cell wall formation. Catalyzes the addition of glutamate to the nucleotide precursor UDP-N-acetylmuramoyl-L-alanine (UMA). This is UDP-N-acetylmuramoylalanine--D-glutamate ligase from Gloeothece citriformis (strain PCC 7424) (Cyanothece sp. (strain PCC 7424)).